Reading from the N-terminus, the 434-residue chain is Nicotinate phosphoribosyltransferase (434 aa).

A Phosphohistidine; by autocatalysis modification is found at H242.

This sequence belongs to the NAPRTase family. Post-translationally, transiently phosphorylated on a His residue during the reaction cycle. Phosphorylation strongly increases the affinity for substrates and increases the rate of nicotinate D-ribonucleotide production. Dephosphorylation regenerates the low-affinity form of the enzyme, leading to product release.

It carries out the reaction nicotinate + 5-phospho-alpha-D-ribose 1-diphosphate + ATP + H2O = nicotinate beta-D-ribonucleotide + ADP + phosphate + diphosphate. The protein operates within cofactor biosynthesis; NAD(+) biosynthesis; nicotinate D-ribonucleotide from nicotinate: step 1/1. Catalyzes the synthesis of beta-nicotinate D-ribonucleotide from nicotinate and 5-phospho-D-ribose 1-phosphate at the expense of ATP. The chain is Nicotinate phosphoribosyltransferase from Sinorhizobium medicae (strain WSM419) (Ensifer medicae).